We begin with the raw amino-acid sequence, 510 residues long: ATP synthase subunit alpha (510 aa).

169–176 (GDRQTGKT) contacts ATP.

Belongs to the ATPase alpha/beta chains family. In terms of assembly, F-type ATPases have 2 components, CF(1) - the catalytic core - and CF(0) - the membrane proton channel. CF(1) has five subunits: alpha(3), beta(3), gamma(1), delta(1), epsilon(1). CF(0) has three main subunits: a(1), b(2) and c(9-12). The alpha and beta chains form an alternating ring which encloses part of the gamma chain. CF(1) is attached to CF(0) by a central stalk formed by the gamma and epsilon chains, while a peripheral stalk is formed by the delta and b chains.

It is found in the cell inner membrane. The enzyme catalyses ATP + H2O + 4 H(+)(in) = ADP + phosphate + 5 H(+)(out). Its function is as follows. Produces ATP from ADP in the presence of a proton gradient across the membrane. The alpha chain is a regulatory subunit. This chain is ATP synthase subunit alpha, found in Azorhizobium caulinodans (strain ATCC 43989 / DSM 5975 / JCM 20966 / LMG 6465 / NBRC 14845 / NCIMB 13405 / ORS 571).